A 756-amino-acid chain; its full sequence is ATP-dependent DNA helicase Hel308 (756 aa).

Residues Q29 and 47–54 each bind ATP; that span reads SATASGKT. The 168-residue stretch at 34–201 folds into the Helicase ATP-binding domain; it reads RAGLLNGENI…WLNAKLVKSD (168 aa). Positions 146–149 match the DEAH box motif; that stretch reads DEIH. Residues 233-435 enclose the Helicase C-terminal domain; that stretch reads SLINLTVDTL…PTSLKFHTLS (203 aa).

The protein belongs to the helicase family. Hel308 subfamily. Monomer.

The catalysed reaction is Couples ATP hydrolysis with the unwinding of duplex DNA by translocating in the 3'-5' direction.. The enzyme catalyses ATP + H2O = ADP + phosphate + H(+). DNA-dependent ATPase and 3'-5' DNA helicase that may be involved in repair of stalled replication forks. The protein is ATP-dependent DNA helicase Hel308 of Caldivirga maquilingensis (strain ATCC 700844 / DSM 13496 / JCM 10307 / IC-167).